A 762-amino-acid chain; its full sequence is 5-methyltetrahydropteroyltriglutamate--homocysteine methyltransferase (762 aa).

5-methyltetrahydropteroyltri-L-glutamate is bound by residues 18-21 (REWK) and lysine 112. L-homocysteine contacts are provided by residues 435-437 (IGS) and glutamate 488. L-methionine-binding positions include 435–437 (IGS) and glutamate 488. 5-methyltetrahydropteroyltri-L-glutamate is bound by residues 519-520 (RC) and tryptophan 565. An L-homocysteine-binding site is contributed by aspartate 603. Aspartate 603 is an L-methionine binding site. A 5-methyltetrahydropteroyltri-L-glutamate-binding site is contributed by glutamate 609. Zn(2+) is bound by residues histidine 645, cysteine 647, and glutamate 669. Histidine 698 (proton donor) is an active-site residue. Cysteine 719 carries the S-bacillithiol cysteine disulfide modification. Cysteine 730 is a Zn(2+) binding site.

The protein belongs to the vitamin-B12 independent methionine synthase family. Zn(2+) serves as cofactor. In terms of processing, in response to oxidative stress, Cys-719 can react with bacillithiol (BSH) to form mixed disulfides. S-bacillithiolation leads to loss of catalytic activity and methionine auxotrophy.

It carries out the reaction 5-methyltetrahydropteroyltri-L-glutamate + L-homocysteine = tetrahydropteroyltri-L-glutamate + L-methionine. It functions in the pathway amino-acid biosynthesis; L-methionine biosynthesis via de novo pathway; L-methionine from L-homocysteine (MetE route): step 1/1. Catalyzes the transfer of a methyl group from 5-methyltetrahydrofolate to homocysteine resulting in methionine formation. The sequence is that of 5-methyltetrahydropteroyltriglutamate--homocysteine methyltransferase from Bacillus subtilis (strain 168).